A 122-amino-acid chain; its full sequence is Vacuolar transporter chaperone complex subunit 1 (122 aa).

Topologically, residues 1-32 (MSTQPLLQTTPGKRIALPVRVEPKVFFANERT) are cytoplasmic. A helical transmembrane segment spans residues 33 to 53 (FLSWLSFAVVLGGLSVGLLNF). Over 54 to 59 (GDRIGK) the chain is Vacuolar. A helical membrane pass occupies residues 60–80 (ISAGLFTIVAIGTMGYALGIY). Topologically, residues 81 to 101 (HWRASAIRRRGSGPYDDRLGP) are cytoplasmic. The chain crosses the membrane as a helical span at residues 102–122 (TILCFVLLAAIITNFVLRMLF).

Belongs to the VTC1 family. As to quaternary structure, the VTC core complex is an integral membrane heterooligomer composed of at least the catalytic subunit vtc4 and the accessory subunits vtc1 and vtc2. vtc1 is a small membrane protein without hydrophilic domain. Vtc2 and vtc4 are related and have 2 hydrophilic domains that face the cytosol, an N-terminal SPX domain and the central core domain. The central core in vtc4 is the catalytic domain. Vtc1 interacts with GTP-bound Ras-like cdc42, which is subsequently inactivated.

The protein localises to the vacuole membrane. Accessory subunit of the vacuolar transporter chaperone (VTC) complex. The VTC complex acts as a vacuolar polyphosphate polymerase that catalyzes the synthesis of inorganic polyphosphate (polyP) via transfer of phosphate from ATP to a growing polyP chain, releasing ADP. VTC exposes its catalytic domain vtc4 to the cytosol, where the growing polyP chain winds through a tunnel-shaped pocket, integrating cytoplasmic polymer synthesis with polyP membrane translocation. The VTC complex carries 9 vacuolar transmembrane domains, which are likely to constitute the translocation channel into the organelle lumen. PolyP synthesis is tightly coupled to its transport into the vacuole lumen, in order to avoid otherwise toxic intermediates in the cytosol, and it depends on the proton gradient across the membrane, formed by V-ATPase. Vtc1 contributes only 3 transmembrane domains to the complex. The VTC complex also plays a role in vacuolar membrane fusion. Involved in the control of cell polarity. The protein is Vacuolar transporter chaperone complex subunit 1 of Schizosaccharomyces pombe (strain 972 / ATCC 24843) (Fission yeast).